The primary structure comprises 314 residues: MIOREX complex component 8 (314 aa).

The EngB-type G domain occupies 132 to 312 (TLPEVIFLGG…RYVIFQSCGL (181 aa)). GTP-binding positions include 140-147 (GGTNVGKS), 173-177 (GFTKT), 191-194 (DSPG), 253-256 (TKMD), and 290-292 (SST). Mg(2+) contacts are provided by serine 147 and threonine 175.

Belongs to the TRAFAC class TrmE-Era-EngA-EngB-Septin-like GTPase superfamily. EngB GTPase family. Associates with the mitochondrial ribosome. The cofactor is Mg(2+). In terms of processing, sumoylated upon ethanol stress.

It localises to the mitochondrion. Functionally, component of MIOREX complexes, large expressome-like assemblies of ribosomes with factors involved in all the steps of post-transcriptional gene expression. This Saccharomyces cerevisiae (strain ATCC 204508 / S288c) (Baker's yeast) protein is MIOREX complex component 8.